A 148-amino-acid polypeptide reads, in one-letter code: Transcriptional regulator MraZ (148 aa).

2 SpoVT-AbrB domains span residues 5-53 (ETAI…VEKE) and 82-125 (SALL…SEQA).

The protein belongs to the MraZ family. In terms of assembly, forms oligomers.

The protein resides in the cytoplasm. Its subcellular location is the nucleoid. In Xylella fastidiosa (strain Temecula1 / ATCC 700964), this protein is Transcriptional regulator MraZ.